A 699-amino-acid polypeptide reads, in one-letter code: Elongation factor G (699 aa).

In terms of domain architecture, tr-type G spans 8 to 290; the sequence is NKYRNLGIMA…KVIELLPSPV (283 aa). Residues 17 to 24, 88 to 92, and 142 to 145 each bind GTP; these read AHIDAGKT, DTPGH, and NKMD.

This sequence belongs to the TRAFAC class translation factor GTPase superfamily. Classic translation factor GTPase family. EF-G/EF-2 subfamily.

The protein localises to the cytoplasm. In terms of biological role, catalyzes the GTP-dependent ribosomal translocation step during translation elongation. During this step, the ribosome changes from the pre-translocational (PRE) to the post-translocational (POST) state as the newly formed A-site-bound peptidyl-tRNA and P-site-bound deacylated tRNA move to the P and E sites, respectively. Catalyzes the coordinated movement of the two tRNA molecules, the mRNA and conformational changes in the ribosome. This chain is Elongation factor G, found in Dichelobacter nodosus (strain VCS1703A).